Here is a 383-residue protein sequence, read N- to C-terminus: ATP phosphoribosyltransferase regulatory subunit (383 aa).

This sequence belongs to the class-II aminoacyl-tRNA synthetase family. HisZ subfamily. Heteromultimer composed of HisG and HisZ subunits.

It is found in the cytoplasm. It participates in amino-acid biosynthesis; L-histidine biosynthesis; L-histidine from 5-phospho-alpha-D-ribose 1-diphosphate: step 1/9. Required for the first step of histidine biosynthesis. May allow the feedback regulation of ATP phosphoribosyltransferase activity by histidine. The polypeptide is ATP phosphoribosyltransferase regulatory subunit (Lactiplantibacillus plantarum (strain ATCC BAA-793 / NCIMB 8826 / WCFS1) (Lactobacillus plantarum)).